We begin with the raw amino-acid sequence, 155 residues long: Transcriptional repressor NrdR (155 aa).

Residues Cys3–Cys34 fold into a zinc finger. The ATP-cone domain occupies Pro49–Glu139.

This sequence belongs to the NrdR family. The cofactor is Zn(2+).

Functionally, negatively regulates transcription of bacterial ribonucleotide reductase nrd genes and operons by binding to NrdR-boxes. The chain is Transcriptional repressor NrdR from Ectopseudomonas mendocina (strain ymp) (Pseudomonas mendocina).